The sequence spans 489 residues: Otolin-1-A (489 aa).

The first 23 residues, 1 to 23 (MPNILHPFIIIMTLLVVATGNQA), serve as a signal peptide directing secretion. The tract at residues 27-57 (KTTQWPRMKPTKKPPPRDEGPSKLGSISTTV) is disordered. Asn-109 is a glycosylation site (N-linked (GlcNAc...) asparagine). The interval 133 to 335 (GPVGEKGLPG…PGMKGTRGLK (203 aa)) is disordered. The segment covering 142-151 (GIPGGKGEMG) has biased composition (gly residues). Collagen-like domains are found at residues 145–204 (GGKG…KGDK), 205–255 (GDTG…KGDK), and 264–323 (GQKG…PGQR). Positions 192 to 206 (QGEKGESGPKGDKGD) are enriched in basic and acidic residues. Asn-225 is a glycosylation site (N-linked (GlcNAc...) asparagine). Over residues 226-235 (GTKGGMGEPG) the composition is skewed to gly residues. The span at 248 to 257 (IKGEKGDKGD) shows a compositional bias: basic and acidic residues. Asn-287 carries an N-linked (GlcNAc...) asparagine glycan. Residues 290 to 310 (DGLPGSKGPKGDPGPLSKQGE) are compositionally biased toward low complexity. In terms of domain architecture, C1q spans 351 to 488 (AVQKRSAFSV…GFLLYADATK (138 aa)). N-linked (GlcNAc...) asparagine glycosylation is found at Asn-391 and Asn-396.

The protein belongs to the OTOL1 family. In terms of assembly, homooligomer; disulfide-linked; probably forms homotrimers. Interacts with otomp.

It localises to the secreted. It is found in the extracellular space. The protein resides in the extracellular matrix. Collagen-like protein, which provides an organic scaffold for otoliths onto the sensory epithelium of the inner ear. Acts as a scaffold for biomineralization by sequestering calcium. The sequence is that of Otolin-1-A (otol1a) from Danio rerio (Zebrafish).